A 445-amino-acid chain; its full sequence is 6-phosphogluconate dehydrogenase, decarboxylating (445 aa).

Residues 1–4 (AVMG), 22–24 (NRS), 63–65 (VQA), and Asn-91 contribute to the NADP(+) site. Substrate contacts are provided by residues Asn-91 and 117–119 (SGG). Lys-172 (proton acceptor) is an active-site residue. 175 to 176 (HN) serves as a coordination point for substrate. Glu-179 acts as the Proton donor in catalysis. Substrate is bound by residues Tyr-180, Lys-249, Arg-276, Arg-434, and His-440.

Belongs to the 6-phosphogluconate dehydrogenase family. In terms of assembly, homodimer.

The catalysed reaction is 6-phospho-D-gluconate + NADP(+) = D-ribulose 5-phosphate + CO2 + NADPH. It participates in carbohydrate degradation; pentose phosphate pathway; D-ribulose 5-phosphate from D-glucose 6-phosphate (oxidative stage): step 3/3. Its function is as follows. Catalyzes the oxidative decarboxylation of 6-phosphogluconate to ribulose 5-phosphate and CO(2), with concomitant reduction of NADP to NADPH. The sequence is that of 6-phosphogluconate dehydrogenase, decarboxylating (gnd) from Pseudescherichia vulneris (Escherichia vulneris).